Consider the following 1043-residue polypeptide: Unconventional myosin-Ia (1043 aa).

The region spanning 8–694 (VGVEDLVLLE…TLFYLEEQRR (687 aa)) is the Myosin motor domain. 101–108 (GESGAGKT) lines the ATP pocket. The actin-binding stretch occupies residues 571 to 593 (VTTLMKNLYSKNPNYIRCIKPNE). 3 consecutive IQ domains span residues 697–719 (LQQLATLIQKTYRGWRCRTHYQL), 720–742 (MRKSQIVISSWFRGNMQKKHYRK), and 743–772 (MKASALLIQAFVRGWKARKNYRKYFRSGAA). In terms of domain architecture, TH1 spans 858-1042 (KASYPQSVPI…KGSRCLEVTV (185 aa)).

This sequence belongs to the TRAFAC class myosin-kinesin ATPase superfamily. Myosin family. In terms of processing, phosphorylated by ALPK1.

Involved in directing the movement of organelles along actin filaments. In Bos taurus (Bovine), this protein is Unconventional myosin-Ia (MYO1A).